We begin with the raw amino-acid sequence, 116 residues long: Classical arabinogalactan protein 25 (116 aa).

The signal sequence occupies residues 1 to 28 (MAFSFLNKLLIIFIFIFISLSSSSPTIS). The segment at 40–95 (LLPSPGDALPSDDGSGTIPSSPSPPDPDTNDGSYPDPLAFSPFASPPVSSPSPPPS) is disordered. Low complexity-rich tracts occupy residues 50–59 (SDDGSGTIPS) and 69–82 (NDGS…FSPF). A compositionally biased stretch (pro residues) spans 83-95 (ASPPVSSPSPPPS). The GPI-anchor amidated serine moiety is linked to residue Ser-89. A propeptide spans 90–116 (PSPPPSLPSAGVLLISLIISSASFLAL) (removed in mature form).

Belongs to the classical AGP family. O-glycosylated on the hydroxyproline residues.

The protein resides in the cell membrane. Its function is as follows. Proteoglycan that seems to be implicated in diverse developmental roles such as differentiation, cell-cell recognition, embryogenesis and programmed cell death. This is Classical arabinogalactan protein 25 (AGP25) from Arabidopsis thaliana (Mouse-ear cress).